Reading from the N-terminus, the 337-residue chain is Dimethyladenosine transferase 1, mitochondrial (337 aa).

The N-terminal 84 residues, 1-84 (MSQVTARVLN…RSILRRQPQR (84 aa)), are a transit peptide targeting the mitochondrion. S-adenosyl-L-methionine-binding positions include 38–41 (QNFL), Asn-39, Leu-41, Gly-67, Glu-89, Asp-118, and Asn-140.

This sequence belongs to the class I-like SAM-binding methyltransferase superfamily. rRNA adenine N(6)-methyltransferase family. KsgA subfamily.

The protein localises to the mitochondrion. Functionally, probable S-adenosyl-L-methionine-dependent methyltransferase which specifically dimethylates mitochondrial 12S rRNA at the conserved stem loop. The chain is Dimethyladenosine transferase 1, mitochondrial (mtTFB1) from Drosophila pseudoobscura pseudoobscura (Fruit fly).